A 338-amino-acid chain; its full sequence is Glycerol-3-phosphate dehydrogenase [NAD(P)+] (338 aa).

4 residues coordinate NADPH: S14, Y15, H35, and K109. Positions 109, 138, and 140 each coordinate sn-glycerol 3-phosphate. Residue A142 coordinates NADPH. 5 residues coordinate sn-glycerol 3-phosphate: K194, D247, S257, R258, and N259. The active-site Proton acceptor is the K194. Position 258 (R258) interacts with NADPH. Residues V282 and E284 each contribute to the NADPH site.

It belongs to the NAD-dependent glycerol-3-phosphate dehydrogenase family.

It is found in the cytoplasm. It catalyses the reaction sn-glycerol 3-phosphate + NAD(+) = dihydroxyacetone phosphate + NADH + H(+). The catalysed reaction is sn-glycerol 3-phosphate + NADP(+) = dihydroxyacetone phosphate + NADPH + H(+). It participates in membrane lipid metabolism; glycerophospholipid metabolism. Functionally, catalyzes the reduction of the glycolytic intermediate dihydroxyacetone phosphate (DHAP) to sn-glycerol 3-phosphate (G3P), the key precursor for phospholipid synthesis. This Shewanella baltica (strain OS195) protein is Glycerol-3-phosphate dehydrogenase [NAD(P)+].